The sequence spans 219 residues: MADLIFQDWGLINYDEALKKQNDLVEKVHTEDLPGFLVFCTHPPVVTVGRATQAGDVFSWNGPVVEVTRGGRATYHGPSQLVVYPILNLAHVRKGRKDREINPYLKVFEDAIVDVLKTYGLTGIEGRSSAKSSFNRADADDTGVWVNDLKIASVGVGVRKWVAFHGAAINLTFDEKAFLGLRPCGFPSEVMVSLEQLTGAKVDVGEFKEKLKRRLLEVL.

In terms of domain architecture, BPL/LPL catalytic spans 31-219 (EDLPGFLVFC…KLKRRLLEVL (189 aa)). Substrate-binding positions include 69 to 76 (RGGRATYH), 153 to 155 (SVG), and 166 to 168 (GAA). Cysteine 184 functions as the Acyl-thioester intermediate in the catalytic mechanism.

The protein belongs to the LipB family.

It is found in the cytoplasm. The catalysed reaction is octanoyl-[ACP] + L-lysyl-[protein] = N(6)-octanoyl-L-lysyl-[protein] + holo-[ACP] + H(+). Its pathway is protein modification; protein lipoylation via endogenous pathway; protein N(6)-(lipoyl)lysine from octanoyl-[acyl-carrier-protein]: step 1/2. Functionally, catalyzes the transfer of endogenously produced octanoic acid from octanoyl-acyl-carrier-protein onto the lipoyl domains of lipoate-dependent enzymes. Lipoyl-ACP can also act as a substrate although octanoyl-ACP is likely to be the physiological substrate. In Bdellovibrio bacteriovorus (strain ATCC 15356 / DSM 50701 / NCIMB 9529 / HD100), this protein is Octanoyltransferase.